The sequence spans 37 residues: Large ribosomal subunit protein bL36c (37 aa).

It belongs to the bacterial ribosomal protein bL36 family.

The protein localises to the plastid. The protein resides in the chloroplast. The sequence is that of Large ribosomal subunit protein bL36c from Welwitschia mirabilis (Tree tumbo).